We begin with the raw amino-acid sequence, 379 residues long: 1-deoxy-D-xylulose 5-phosphate reductoisomerase (379 aa).

Residues Thr-10, Gly-11, Ser-12, Ile-13, Arg-38, Asn-39, and Asn-121 each contribute to the NADPH site. Position 122 (Lys-122) interacts with 1-deoxy-D-xylulose 5-phosphate. Glu-123 is an NADPH binding site. Residue Asp-147 coordinates Mn(2+). Residues Ser-148, Glu-149, Ser-173, and His-196 each contribute to the 1-deoxy-D-xylulose 5-phosphate site. A Mn(2+)-binding site is contributed by Glu-149. Gly-202 is an NADPH binding site. 1-deoxy-D-xylulose 5-phosphate contacts are provided by Ser-209, Asn-214, Lys-215, and Glu-218. Mn(2+) is bound at residue Glu-218.

It belongs to the DXR family. Mg(2+) serves as cofactor. Mn(2+) is required as a cofactor.

The enzyme catalyses 2-C-methyl-D-erythritol 4-phosphate + NADP(+) = 1-deoxy-D-xylulose 5-phosphate + NADPH + H(+). It functions in the pathway isoprenoid biosynthesis; isopentenyl diphosphate biosynthesis via DXP pathway; isopentenyl diphosphate from 1-deoxy-D-xylulose 5-phosphate: step 1/6. Catalyzes the NADPH-dependent rearrangement and reduction of 1-deoxy-D-xylulose-5-phosphate (DXP) to 2-C-methyl-D-erythritol 4-phosphate (MEP). This chain is 1-deoxy-D-xylulose 5-phosphate reductoisomerase, found in Chlamydia muridarum (strain MoPn / Nigg).